Consider the following 1178-residue polypeptide: Pyruvate carboxylase, mitochondrial (1178 aa).

A mitochondrion-targeting transit peptide spans 1-20; sequence MLKFRTVHGGLRLLGIRRTS. N6-acetyllysine is present on residues Lys-35 and Lys-39. Residues 36–486 enclose the Biotin carboxylation domain; that stretch reads PIKKVMVANR…DTQFIDENPE (451 aa). An N6-acetyllysine; alternate modification is found at Lys-79. The residue at position 79 (Lys-79) is an N6-succinyllysine; alternate. N6-acetyllysine occurs at positions 148 and 152. ATP contacts are provided by Lys-152 and Glu-236. The ATP-grasp domain maps to 156 to 353; the sequence is RAIAIAAGVP…LVHAQIHVAE (198 aa). An N6-acetyllysine modification is found at Lys-241. His-271 provides a ligand contact to ATP. An N6-acetyllysine mark is found at Lys-297 and Lys-319. Arg-328 is an active-site residue. Residue Lys-434 is modified to N6-acetyllysine. Lys-442 carries the post-translational modification N6-succinyllysine. A Pyruvate carboxyltransferase domain is found at 563-832; the sequence is LLLMDTTFRD…DTEVPMERVF (270 aa). 571–575 is a substrate binding site; the sequence is RDAHQ. Position 572 (Asp-572) interacts with Mn(2+). Residue Lys-589 is modified to N6-acetyllysine. Residue Arg-644 participates in substrate binding. 2 positions are modified to N6-acetyllysine: Lys-661 and Lys-717. Lys-741 provides a ligand contact to Mn(2+). The residue at position 741 (Lys-741) is an N6-carboxylysine. Lys-748 carries the N6-acetyllysine modification. Mn(2+)-binding residues include His-771 and His-773. Lys-892 carries the N6-acetyllysine modification. Thr-908 contacts substrate. Residues Lys-969 and Lys-992 each carry the N6-acetyllysine modification. Thr-1003 is subject to Phosphothreonine. N6-acetyllysine is present on residues Lys-1061, Lys-1090, and Lys-1124. In terms of domain architecture, Biotinyl-binding spans 1109–1178; it reads KGQIGAPMPG…EGDDLILEIE (70 aa). Lys-1144 bears the N6-biotinyllysine mark.

In terms of assembly, homotetramer. Interacts (via the biotin carboxylation domain) with SIRT4. The cofactor is biotin. Mn(2+) serves as cofactor. Post-translationally, acetylation of Lys-748 might play a role in catalytic activity regulation.

Its subcellular location is the mitochondrion matrix. The catalysed reaction is hydrogencarbonate + pyruvate + ATP = oxaloacetate + ADP + phosphate + H(+). Its pathway is carbohydrate biosynthesis; gluconeogenesis. In terms of biological role, pyruvate carboxylase catalyzes a 2-step reaction, involving the ATP-dependent carboxylation of the covalently attached biotin in the first step and the transfer of the carboxyl group to pyruvate in the second. Catalyzes in a tissue specific manner, the initial reactions of glucose (liver, kidney) and lipid (adipose tissue, liver, brain) synthesis from pyruvate. The protein is Pyruvate carboxylase, mitochondrial of Homo sapiens (Human).